We begin with the raw amino-acid sequence, 593 residues long: NADH-quinone oxidoreductase subunit C/D (593 aa).

Positions 1–184 (MTADNAIFIP…DPYSLTLAKQ (184 aa)) are NADH dehydrogenase I subunit C. The interval 208-593 (DYMFLNLGPN…IDFVMADVDR (386 aa)) is NADH dehydrogenase I subunit D.

This sequence in the N-terminal section; belongs to the complex I 30 kDa subunit family. It in the C-terminal section; belongs to the complex I 49 kDa subunit family. In terms of assembly, NDH-1 is composed of 13 different subunits. Subunits NuoB, CD, E, F, and G constitute the peripheral sector of the complex.

It localises to the cell inner membrane. The enzyme catalyses a quinone + NADH + 5 H(+)(in) = a quinol + NAD(+) + 4 H(+)(out). Functionally, NDH-1 shuttles electrons from NADH, via FMN and iron-sulfur (Fe-S) centers, to quinones in the respiratory chain. The immediate electron acceptor for the enzyme in this species is believed to be ubiquinone. Couples the redox reaction to proton translocation (for every two electrons transferred, four hydrogen ions are translocated across the cytoplasmic membrane), and thus conserves the redox energy in a proton gradient. This chain is NADH-quinone oxidoreductase subunit C/D, found in Pseudomonas putida (strain ATCC 700007 / DSM 6899 / JCM 31910 / BCRC 17059 / LMG 24140 / F1).